A 512-amino-acid chain; its full sequence is PTS system mannitol-specific EIICB component (512 aa).

Over 1 to 28 (MSQTEEKKGIGRRVQAFGSFLSSMIMPN) the chain is Cytoplasmic. In terms of domain architecture, PTS EIIC type-2 spans 17–349 (FGSFLSSMIM…MKFTREPKQD (333 aa)). A helical membrane pass occupies residues 29–50 (IGAFIAWGFIAAIFIDNGWLPN). Over 51–54 (KDLA) the chain is Extracellular. The chain crosses the membrane as a helical span at residues 55–75 (TLAGPMITYLIPLLIAFSGGR). The Cytoplasmic portion of the chain corresponds to 76-139 (LIYDLRGGII…QGFEMLFNNF (64 aa)). The helical transmembrane segment at 140-161 (SAGILGFIMTIAGFKILAPLMK) threads the bilayer. Over 162 to 170 (FIMHILSVA) the chain is Extracellular. Residues 171–191 (VEALVHAHLLPLVSILVEPAK) traverse the membrane as a helical segment. Residues 192 to 278 (IVFLNNAINH…VLMRPLLFIA (87 aa)) lie on the Cytoplasmic side of the membrane. The helical transmembrane segment at 279–298 (VILGGMTGVATYQATGFGFK) threads the bilayer. The Extracellular segment spans residues 299–318 (SPASPGSFIVYCLNAPRGEF). Residues 319-340 (LHMLLGVFLAALVSFVVAALIM) traverse the membrane as a helical segment. The Cytoplasmic segment spans residues 341–512 (KFTREPKQDL…LNNLKKDDQA (172 aa)). The interval 355–402 (AQMENTKGKKSSVASKLVSSDKNVNTEENASGNVSETSSSDDDPEALL) is disordered. Positions 365–376 (SSVASKLVSSDK) are enriched in low complexity. The segment covering 380 to 392 (TEENASGNVSETS) has biased composition (polar residues). In terms of domain architecture, PTS EIIB type-2 spans 419–512 (NHVIFACDAG…LNNLKKDDQA (94 aa)). The active-site Phosphocysteine intermediate; for EIIB activity is the Cys425. The residue at position 425 (Cys425) is a Phosphocysteine; by EIIA.

Homodimer.

It localises to the cell membrane. It catalyses the reaction D-mannitol(out) + N(pros)-phospho-L-histidyl-[protein] = D-mannitol 1-phosphate(in) + L-histidyl-[protein]. Its function is as follows. The phosphoenolpyruvate-dependent sugar phosphotransferase system (sugar PTS), a major carbohydrate active transport system, catalyzes the phosphorylation of incoming sugar substrates concomitantly with their translocation across the cell membrane. The enzyme II CmtAB PTS system is involved in D-mannitol transport. The protein is PTS system mannitol-specific EIICB component (mtlA) of Staphylococcus aureus (strain COL).